A 374-amino-acid polypeptide reads, in one-letter code: Cytochrome b (374 aa).

4 helical membrane-spanning segments follow: residues 25-45, 69-90, 105-125, and 170-190; these read FGSMLLTCLMLQITTGFFLAI, WIIQNTHAMGASMFFICIYMHI, WLSGVSLLITLMATAFFGYVL, and FFALHFILPFIIISLSSIHII. Positions 75 and 89 each coordinate heme b. Residues His174 and His188 each coordinate heme b. His193 serves as a coordination point for a ubiquinone. The next 4 helical transmembrane spans lie at 218 to 238, 280 to 300, 312 to 332, and 339 to 358; these read YKDMLMTTILISILFYILSFT, LGGALALLLSIIILTSAPFTH, LAQILFWILATAFITITWTAT, and FITISQWTSTLYFSFFMINP.

The protein belongs to the cytochrome b family. As to quaternary structure, the cytochrome bc1 complex contains 3 respiratory subunits (MT-CYB, CYC1 and UQCRFS1), 2 core proteins (UQCRC1 and UQCRC2) and probably 6 low-molecular weight proteins. Heme b is required as a cofactor.

Its subcellular location is the mitochondrion inner membrane. In terms of biological role, component of the ubiquinol-cytochrome c reductase complex (complex III or cytochrome b-c1 complex) that is part of the mitochondrial respiratory chain. The b-c1 complex mediates electron transfer from ubiquinol to cytochrome c. Contributes to the generation of a proton gradient across the mitochondrial membrane that is then used for ATP synthesis. In Calliophis bivirgatus (Blue Malaysian coral snake), this protein is Cytochrome b (MT-CYB).